Here is a 340-residue protein sequence, read N- to C-terminus: Glycerol-3-phosphate dehydrogenase [NAD(P)+] (340 aa).

NADPH contacts are provided by serine 11, tryptophan 12, arginine 33, and lysine 106. Lysine 106, glycine 137, and serine 139 together coordinate sn-glycerol 3-phosphate. Residue alanine 141 participates in NADPH binding. 5 residues coordinate sn-glycerol 3-phosphate: lysine 192, aspartate 245, serine 255, arginine 256, and asparagine 257. The Proton acceptor role is filled by lysine 192. Arginine 256 serves as a coordination point for NADPH. Residues valine 280 and glutamate 282 each contribute to the NADPH site.

The protein belongs to the NAD-dependent glycerol-3-phosphate dehydrogenase family.

The protein resides in the cytoplasm. The enzyme catalyses sn-glycerol 3-phosphate + NAD(+) = dihydroxyacetone phosphate + NADH + H(+). The catalysed reaction is sn-glycerol 3-phosphate + NADP(+) = dihydroxyacetone phosphate + NADPH + H(+). Its pathway is membrane lipid metabolism; glycerophospholipid metabolism. In terms of biological role, catalyzes the reduction of the glycolytic intermediate dihydroxyacetone phosphate (DHAP) to sn-glycerol 3-phosphate (G3P), the key precursor for phospholipid synthesis. This is Glycerol-3-phosphate dehydrogenase [NAD(P)+] from Bacillus anthracis (strain A0248).